A 67-amino-acid polypeptide reads, in one-letter code: Nigrocin-2GRc (67 aa).

Residues 1–22 (MFTMKKSMLLLFFLGTISLSLC) form the signal peptide. Residues 23–46 (EQERNADEEERRDEEVAKMEEIKR) constitute a propeptide that is removed on maturation. A disulfide bond links C61 and C67.

Expressed by the skin glands.

The protein localises to the secreted. In terms of biological role, antimicrobial peptide active at least against the Gram-positive bacterium S.aureus but with otherwise unclear activity spectrum. Lacks hemolytic activity against rabbit or human erythrocytes. This chain is Nigrocin-2GRc, found in Odorrana grahami (Yunnanfu frog).